Here is a 427-residue protein sequence, read N- to C-terminus: Dihydroorotase (427 aa).

Zn(2+) contacts are provided by His-58 and His-60. Substrate contacts are provided by residues 60 to 62 (HLR) and Asn-92. The Zn(2+) site is built by Asp-150, His-177, and His-230. Asn-276 serves as a coordination point for substrate. Asp-303 lines the Zn(2+) pocket. Asp-303 is a catalytic residue. Substrate-binding positions include His-307 and 321–322 (FG).

It belongs to the metallo-dependent hydrolases superfamily. DHOase family. Class I DHOase subfamily. Zn(2+) serves as cofactor.

It catalyses the reaction (S)-dihydroorotate + H2O = N-carbamoyl-L-aspartate + H(+). It participates in pyrimidine metabolism; UMP biosynthesis via de novo pathway; (S)-dihydroorotate from bicarbonate: step 3/3. Catalyzes the reversible cyclization of carbamoyl aspartate to dihydroorotate. This Macrococcus caseolyticus (strain JCSC5402) (Macrococcoides caseolyticum) protein is Dihydroorotase.